The following is a 207-amino-acid chain: MAKTYDYLFKLLLIGDSGVGKTCLLFRFSEDAFNTTFISTIGIDFKIRTIELDGKKIKLQIWDTAGQERFRTITTAYYRGAMGIMLVYDITNEKSFDNIKNWIRNIEEHASSDVERMILGNKCDMNDKRQVSKERGEKLAIDYGIKFLETSAKSSTNVEEAFFTLARDIMTKLNRKMNDSNSAGAGGPVKITENRSKKTSFFRCLLL.

Positions 17, 18, 19, 20, 21, 22, 23, 35, 39, and 40 each coordinate GTP. Mg(2+) is bound at residue threonine 22. 2 short sequence motifs (switch) span residues 31–45 (DAFNTTFISTIGIDF) and 63–80 (DTAGQERFRTITTAYYRG). Residues threonine 40 and aspartate 63 each contribute to the Mg(2+) site. Glycine 66 is a GTP binding site. Threonine 72 carries the phosphothreonine modification. Positions 121, 122, 124, 152, and 153 each coordinate GTP. Serine 180 carries the phosphoserine modification. Cysteine 204 is modified (cysteine methyl ester). Cysteine 204 is lipidated: S-geranylgeranyl cysteine. Positions 205-207 (LLL) are cleaved as a propeptide — removed in mature form.

It belongs to the small GTPase superfamily. Rab family. As to quaternary structure, associated with actin, delta-catenin and alpha and beta tubulins. Interacts with OTOF. Interacts with PEX5R. Interacts with RAB3IP. Interacts with VIM. Interacts with CDH1. Interacts with MICALL2. Interacts with GDI1, GDI2, CHML and CHM; phosphorylation at Thr-72 disrupts these interactions. Interacts with MICAL1. It depends on Mg(2+) as a cofactor. In terms of processing, phosphorylation of Thr-72 in the switch II region by LRRK2 prevents the association of RAB regulatory proteins, including CHM, CHML and RAB GDP dissociation inhibitors GDI1 and GDI2.

The protein resides in the cell membrane. The protein localises to the cytoplasmic vesicle. It is found in the phagosome membrane. It localises to the endosome membrane. The catalysed reaction is GTP + H2O = GDP + phosphate + H(+). Its activity is regulated as follows. Regulated by guanine nucleotide exchange factors (GEFs) including RAB3IP/RABIN8 which promotes the exchange of bound GDP for free GTP. Regulated by GTPase activating proteins (GAPs) which increase the GTP hydrolysis activity. Inhibited by GDP dissociation inhibitors (GDIs). Its function is as follows. The small GTPases Rab are key regulators of intracellular membrane trafficking, from the formation of transport vesicles to their fusion with membranes. Rabs cycle between an inactive GDP-bound form and an active GTP-bound form that is able to recruit to membranes different sets of downstream effectors directly responsible for vesicle formation, movement, tethering and fusion. RAB8B may be involved in polarized vesicular trafficking and neurotransmitter release. May participate in cell junction dynamics in Sertoli cells. May also participate in the export of a subset of neosynthesized proteins through a Rab8-Rab10-Rab11-dependent endososomal export route. This is Ras-related protein Rab-8B (RAB8B) from Pongo abelii (Sumatran orangutan).